The primary structure comprises 298 residues: tRNA (guanine(9)-N1)-methyltransferase (298 aa).

Residues 1-10 show a composition bias toward polar residues; it reads MSDTSENSNA. The interval 1 to 44 is disordered; it reads MSDTSENSNAEIPADTSDVKDKPKPIVRAPQFPPPPEGISKSQW. The SAM-dependent MTase TRM10-type domain maps to 96–285; the sequence is PPKVNLNQSD…SVLPPRKLEV (190 aa). Residues 192–193, G212, 216–220, C224, L238, and 250–252 each bind S-adenosyl-L-methionine; these read LT, DKNRH, and KVL. The active-site Proton acceptor is the D216.

It belongs to the class IV-like SAM-binding methyltransferase superfamily. TRM10 family. In terms of assembly, monomer.

The protein localises to the cytoplasm. The protein resides in the nucleus. The enzyme catalyses guanosine(9) in tRNA + S-adenosyl-L-methionine = N(1)-methylguanosine(9) in tRNA + S-adenosyl-L-homocysteine + H(+). In terms of biological role, S-adenosyl-L-methionine-dependent guanine N(1)-methyltransferase that catalyzes the formation of N(1)-methylguanine at position 9 (m1G9) in cytoplasmic tRNA. The polypeptide is tRNA (guanine(9)-N1)-methyltransferase (Kluyveromyces lactis (strain ATCC 8585 / CBS 2359 / DSM 70799 / NBRC 1267 / NRRL Y-1140 / WM37) (Yeast)).